Reading from the N-terminus, the 394-residue chain is 8-amino-7-oxononanoate synthase (394 aa).

Arg-21 serves as a coordination point for substrate. 112–113 (GY) lines the pyridoxal 5'-phosphate pocket. His-137 contacts substrate. Pyridoxal 5'-phosphate-binding residues include Ser-183, His-211, and Thr-239. Lys-242 carries the post-translational modification N6-(pyridoxal phosphate)lysine. A substrate-binding site is contributed by Thr-358.

Belongs to the class-II pyridoxal-phosphate-dependent aminotransferase family. BioF subfamily. In terms of assembly, homodimer. It depends on pyridoxal 5'-phosphate as a cofactor.

The catalysed reaction is 6-carboxyhexanoyl-[ACP] + L-alanine + H(+) = (8S)-8-amino-7-oxononanoate + holo-[ACP] + CO2. It functions in the pathway cofactor biosynthesis; biotin biosynthesis. Catalyzes the decarboxylative condensation of pimeloyl-[acyl-carrier protein] and L-alanine to produce 8-amino-7-oxononanoate (AON), [acyl-carrier protein], and carbon dioxide. This Burkholderia pseudomallei (strain 1710b) protein is 8-amino-7-oxononanoate synthase.